A 408-amino-acid chain; its full sequence is uncharacterized protein (408 aa).

This is an uncharacterized protein from Methanocaldococcus jannaschii (strain ATCC 43067 / DSM 2661 / JAL-1 / JCM 10045 / NBRC 100440) (Methanococcus jannaschii).